A 242-amino-acid polypeptide reads, in one-letter code: Venom nerve growth factor 3 (242 aa).

The signal sequence occupies residues 1–18; the sequence is MSMLCYTLIIAFLIGIWA. Residues 19–125 constitute a propeptide that is removed on maturation; the sequence is APKSEDNVPL…ALNRNIRSKR (107 aa). The segment covering 48-66 has biased composition (basic and acidic residues); sequence LKTSRNTDQRHPAPKKAED. The segment at 48 to 69 is disordered; sequence LKTSRNTDQRHPAPKKAEDQEL. Cystine bridges form between Cys-139–Cys-203, Cys-181–Cys-231, and Cys-191–Cys-233. Asn-147 carries an N-linked (GlcNAc...) asparagine glycan.

The protein belongs to the NGF-beta family. As to quaternary structure, homodimer; non-covalently linked. As to expression, expressed by the venom gland.

The protein localises to the secreted. Functionally, nerve growth factor is important for the development and maintenance of the sympathetic and sensory nervous systems. It stimulates division and differentiation of sympathetic and embryonic sensory neurons as well as basal forebrain cholinergic neurons in the brain. Its relevance in the snake venom is not clear. However, it has been shown to inhibit metalloproteinase-dependent proteolysis of platelet glycoprotein Ib alpha, suggesting a metalloproteinase inhibition to prevent metalloprotease autodigestion and/or protection against prey proteases. Binds a lipid between the two protein chains in the homodimer. The lipid-bound form promotes histamine relase from mouse mast cells, contrary to the lipid-free form. In Demansia vestigiata (Lesser black whip snake), this protein is Venom nerve growth factor 3.